The sequence spans 370 residues: Glutamate 5-kinase (370 aa).

Residue lysine 17 participates in ATP binding. Substrate-binding residues include serine 56, aspartate 143, and asparagine 155. Serine 175–aspartate 176 contributes to the ATP binding site. The PUA domain maps to lysine 280 to proline 357.

The protein belongs to the glutamate 5-kinase family.

It localises to the cytoplasm. It carries out the reaction L-glutamate + ATP = L-glutamyl 5-phosphate + ADP. The protein operates within amino-acid biosynthesis; L-proline biosynthesis; L-glutamate 5-semialdehyde from L-glutamate: step 1/2. Functionally, catalyzes the transfer of a phosphate group to glutamate to form L-glutamate 5-phosphate. This chain is Glutamate 5-kinase, found in Paracoccus denitrificans (strain Pd 1222).